The following is a 445-amino-acid chain: Ribosomal protein uS12 methylthiotransferase RimO (445 aa).

In terms of domain architecture, MTTase N-terminal spans 11–121 (PKISFVSLGC…VLDAVHRASP (111 aa)). The [4Fe-4S] cluster site is built by Cys20, Cys56, Cys85, Cys152, Cys156, and Cys159. The 238-residue stretch at 138–375 (LTPRHYAYLK…MARQQKISAR (238 aa)) folds into the Radical SAM core domain. One can recognise a TRAM domain in the interval 378–444 (KRKVGTRQQI…EYDLHGTVAG (67 aa)).

It belongs to the methylthiotransferase family. RimO subfamily. [4Fe-4S] cluster serves as cofactor.

The protein localises to the cytoplasm. The enzyme catalyses L-aspartate(89)-[ribosomal protein uS12]-hydrogen + (sulfur carrier)-SH + AH2 + 2 S-adenosyl-L-methionine = 3-methylsulfanyl-L-aspartate(89)-[ribosomal protein uS12]-hydrogen + (sulfur carrier)-H + 5'-deoxyadenosine + L-methionine + A + S-adenosyl-L-homocysteine + 2 H(+). Functionally, catalyzes the methylthiolation of an aspartic acid residue of ribosomal protein uS12. The polypeptide is Ribosomal protein uS12 methylthiotransferase RimO (Bradyrhizobium sp. (strain ORS 278)).